The primary structure comprises 691 residues: Zinc finger protein 770 (691 aa).

Lys-11 participates in a covalent cross-link: Glycyl lysine isopeptide (Lys-Gly) (interchain with G-Cter in SUMO2). C2H2-type zinc fingers lie at residues 27–49 (YVCN…YLIH), 55–77 (FECD…QLTH), and 81–103 (FKCS…QQLH). Residues Lys-112, Lys-121, and Lys-146 each participate in a glycyl lysine isopeptide (Lys-Gly) (interchain with G-Cter in SUMO2) cross-link. 3 consecutive C2H2-type zinc fingers follow at residues 160–182 (HACT…VLIH), 188–210 (FKCV…QLTH), and 216–238 (FQCC…KQIH). Positions 258 to 277 (PLPNKLNANQGGFENGEIGE) are disordered. Lys-262 participates in a covalent cross-link: Glycyl lysine isopeptide (Lys-Gly) (interchain with G-Cter in SUMO2). A C2H2-type 7; degenerate zinc finger spans residues 294–318 (FQCPKCEKCFESEQILNEHSCFAAR). Glycyl lysine isopeptide (Lys-Gly) (interchain with G-Cter in SUMO2) cross-links involve residues Lys-420 and Lys-437. C2H2-type zinc fingers lie at residues 475–497 (CPCD…YLIH), 503–525 (FGCN…EQTH), 625–647 (YRCS…YLIH), and 653–675 (FECS…QLTH). A Glycyl lysine isopeptide (Lys-Gly) (interchain with G-Cter in SUMO2) cross-link involves residue Lys-683.

It belongs to the krueppel C2H2-type zinc-finger protein family.

The protein resides in the nucleus. May be involved in transcriptional regulation. The protein is Zinc finger protein 770 (ZNF770) of Homo sapiens (Human).